The primary structure comprises 307 residues: Mitochondrial glycine transporter (307 aa).

Solcar repeat units follow at residues 8–87 (PRNS…MRSS), 115–199 (LTMY…SKQL), and 221–305 (TSTT…LVKR). 6 helical membrane-spanning segments follow: residues 14 to 39 (LIGGFFGGLTSAVALQPLDLLKTRIQ), 62 to 88 (GTLPSALRTSIGSALYLSCLNLMRSSL), 121 to 146 (LLTGAFARGLVGYITMPITVIKVRYE), 174 to 197 (GFGATCLRDAPYAGLYVLLYEKSK), 225 to 251 (VNTTSAVLSASLATTVTAPFDTIKTRM), and 280 to 298 (GLSMRLARKALSAGIAWGI).

The protein belongs to the mitochondrial carrier (TC 2.A.29) family. SLC25A38 subfamily.

Its subcellular location is the mitochondrion inner membrane. It carries out the reaction glycine(in) = glycine(out). In terms of biological role, mitochondrial glycine transporter that imports glycine into the mitochondrial matrix. Plays an important role in providing glycine for the first enzymatic step in heme biosynthesis, the condensation of glycine with succinyl-CoA to produce 5-aminolevulinate (ALA) in the mitochondrial matrix. The protein is Mitochondrial glycine transporter of Saccharomyces cerevisiae (strain RM11-1a) (Baker's yeast).